Reading from the N-terminus, the 400-residue chain is Enoyl-[acyl-carrier-protein] reductase [NADH] (400 aa).

NAD(+) is bound by residues 48-53 (GSSSGY), 74-75 (FE), 111-112 (DA), and 139-140 (LA). Residue Tyr-225 coordinates substrate. Tyr-235 acts as the Proton donor in catalysis. Residues Lys-244 and 273-275 (VVT) each bind NAD(+).

It belongs to the TER reductase family. As to quaternary structure, monomer.

It carries out the reaction a 2,3-saturated acyl-[ACP] + NAD(+) = a (2E)-enoyl-[ACP] + NADH + H(+). It participates in lipid metabolism; fatty acid biosynthesis. In terms of biological role, involved in the final reduction of the elongation cycle of fatty acid synthesis (FAS II). Catalyzes the reduction of a carbon-carbon double bond in an enoyl moiety that is covalently linked to an acyl carrier protein (ACP). In Shewanella loihica (strain ATCC BAA-1088 / PV-4), this protein is Enoyl-[acyl-carrier-protein] reductase [NADH].